Consider the following 383-residue polypeptide: MSKKRSIFEEVSEAQPKAQPVQPGVIDRAARTGARGAVRVWLMMLFGLVVIMIAVGGLTRLTDSGLSITEWAPIAGAIPPLSAEDWAREFDLYRAIPEYQLQNKGMTLAEFQFIYWWEWGHRQLGRVIGLVWALGFFGFLVTRKIPPGWTGRLFLLGVLGGLQGAIGWWMVASGLTGTMLDVASYRLATHLGLAFFILGLIAWYIMVLGRPERDLLQARRSGEAGLVTGANWLMGLAAVQILLGALVAGIDAGRTYTDWPLMAGGFLPLNMWELEPIWRNFFEDPGLVQFNHRMVGYLLLLVGLYVWWRSRRSAHVTTKRAFDWVAVILFGQMVLGIVTVLNAAPWTWAIAHQFGAVVTICLILRARFRARYPVATSLRGAVA.

8 helical membrane passes run 38–58 (VRVWLMMLFGLVVIMIAVGGL), 127–147 (VIGLVWALGFFGFLVTRKIPP), 153–173 (LFLLGVLGGLQGAIGWWMVAS), 187–207 (LATHLGLAFFILGLIAWYIMV), 230–250 (ANWLMGLAAVQILLGALVAGI), 287–307 (LVQFNHRMVGYLLLLVGLYVW), 321–341 (AFDWVAVILFGQMVLGIVTVL), and 344–364 (APWTWAIAHQFGAVVTICLIL). Heme is bound at residue His292. Heme is bound at residue His352.

The protein belongs to the COX15/CtaA family. Type 2 subfamily. As to quaternary structure, interacts with CtaB. It depends on heme b as a cofactor.

It localises to the cell membrane. The catalysed reaction is Fe(II)-heme o + 2 A + H2O = Fe(II)-heme a + 2 AH2. It functions in the pathway porphyrin-containing compound metabolism; heme A biosynthesis; heme A from heme O: step 1/1. Catalyzes the conversion of heme O to heme A by two successive hydroxylations of the methyl group at C8. The first hydroxylation forms heme I, the second hydroxylation results in an unstable dihydroxymethyl group, which spontaneously dehydrates, resulting in the formyl group of heme A. This is Heme A synthase from Dinoroseobacter shibae (strain DSM 16493 / NCIMB 14021 / DFL 12).